We begin with the raw amino-acid sequence, 413 residues long: Probable aminotransferase sirI (413 aa).

The residue at position 255 (lysine 255) is an N6-(pyridoxal phosphate)lysine.

Belongs to the class-I pyridoxal-phosphate-dependent aminotransferase family. Pyridoxal 5'-phosphate serves as cofactor.

It participates in mycotoxin biosynthesis. Probable aminotransferase; part of the gene cluster that mediates the biosynthesis of sirodesmin PL, an epipolythiodioxopiperazine (ETP) characterized by a disulfide bridged cyclic dipeptide and that acts as a phytotoxin which is involved in the blackleg didease of canola. SirD catalyzes the O-prenylation of L-tyrosine (L-Tyr) in the presence of dimethylallyl diphosphate (DMAPP) to yield 4-O-dimethylallyl-L-Tyr, and therefore represents probably the first pathway-specific enzyme in the biosynthesis of sirodesmin PL. 4-O-dimethylallyl-L-Tyr, then undergoes condensation with L-Ser in a reaction catalyzed by the non-ribosomal peptide synthase sirP to form the diketopiperazine (DKP) backbone. Further bishydroxylation of the DKP performed by the cytochrome P450 monooxygenase sirC leads to the production of the intermediate phomamide. This step is essential to form the reactive thiol group required for toxicity of sirodesmin PL. The next steps of sirodesmin biosynthesis are not well understood yet, but some predictions could be made from intermediate compounds identification. Phomamide is converted into phomalizarine via oxidation, probably by sirT. Further oxidation, methylation (by sirM or sirN) and reduction steps convert phomalizarine to deacetyl sirodesmin. Finally, acetyltransferase sirH probably acetylates deacetyl sirodesmin to produce sirodesmin PL. The polypeptide is Probable aminotransferase sirI (Leptosphaeria maculans (Blackleg fungus)).